We begin with the raw amino-acid sequence, 308 residues long: tRNA pseudouridine synthase B (308 aa).

Asp49 serves as the catalytic Nucleophile.

This sequence belongs to the pseudouridine synthase TruB family. Type 1 subfamily.

It catalyses the reaction uridine(55) in tRNA = pseudouridine(55) in tRNA. Functionally, responsible for synthesis of pseudouridine from uracil-55 in the psi GC loop of transfer RNAs. The sequence is that of tRNA pseudouridine synthase B from Corynebacterium jeikeium (strain K411).